The sequence spans 470 residues: MGLGRVTQVMGPVIDVRFEHNEVPEINNALVVDVERDEGTVSLTLEVALQLGDDVVRTIAMDSTDGVKRGTEVRDSGDSISVPVGDATLGRVFNVLGDTIDLDEKLDTSVKRDPIHREAPAFDQLSTKVEILETGIKVIDLLAPYIKGGKIGLFGGAGVGKTVLIQELINNIAQEHGGISVFAGVGERTREGNDLYYEMSDSGVIKKTAMVFGQMNEPPGARMRVALSGLTMAEHFRDVQGQDVLLFIDNIFRFTQAGSEVSALLGRMPSAVGYQPTLATEMGQLQERITSTTKGSVTSIQAVFVPADDYTDPAPAAVFAHLDATTNLERKLTEMGIYPAVDPLASTSRALDPTIVGQDHYEIARDVQSTLQKYRELQDIIAILGMDELSEEDKQTVERARRIQFFLSQNFHVAEQFTGQKGSYVPVQKTVEGFKAILDGEYDHIPEDAFRLVGSMEEVIAKAKDMGVEV.

ATP is bound at residue 155–162 (GGAGVGKT).

Belongs to the ATPase alpha/beta chains family. F-type ATPases have 2 components, CF(1) - the catalytic core - and CF(0) - the membrane proton channel. CF(1) has five subunits: alpha(3), beta(3), gamma(1), delta(1), epsilon(1). CF(0) has three main subunits: a(1), b(2) and c(9-12). The alpha and beta chains form an alternating ring which encloses part of the gamma chain. CF(1) is attached to CF(0) by a central stalk formed by the gamma and epsilon chains, while a peripheral stalk is formed by the delta and b chains.

Its subcellular location is the cell membrane. The catalysed reaction is ATP + H2O + 4 H(+)(in) = ADP + phosphate + 5 H(+)(out). Functionally, produces ATP from ADP in the presence of a proton gradient across the membrane. The catalytic sites are hosted primarily by the beta subunits. The chain is ATP synthase subunit beta from Staphylococcus saprophyticus subsp. saprophyticus (strain ATCC 15305 / DSM 20229 / NCIMB 8711 / NCTC 7292 / S-41).